Consider the following 280-residue polypeptide: Phosphatidylglycerol--prolipoprotein diacylglyceryl transferase (280 aa).

Transmembrane regions (helical) follow at residues 23–43 (LRWY…LAGV), 58–78 (LLFW…VLFY), 93–113 (IWTG…ALWW), and 120–140 (CTFL…LGAG). Arginine 141 is a binding site for a 1,2-diacyl-sn-glycero-3-phospho-(1'-sn-glycerol). 3 consecutive transmembrane segments (helical) span residues 173-193 (PSQL…LWLY), 200-220 (IGAV…FVEF), and 241-261 (QGQI…VWAV).

This sequence belongs to the Lgt family.

The protein resides in the cell inner membrane. It carries out the reaction L-cysteinyl-[prolipoprotein] + a 1,2-diacyl-sn-glycero-3-phospho-(1'-sn-glycerol) = an S-1,2-diacyl-sn-glyceryl-L-cysteinyl-[prolipoprotein] + sn-glycerol 1-phosphate + H(+). It participates in protein modification; lipoprotein biosynthesis (diacylglyceryl transfer). In terms of biological role, catalyzes the transfer of the diacylglyceryl group from phosphatidylglycerol to the sulfhydryl group of the N-terminal cysteine of a prolipoprotein, the first step in the formation of mature lipoproteins. The polypeptide is Phosphatidylglycerol--prolipoprotein diacylglyceryl transferase (Pseudoalteromonas atlantica (strain T6c / ATCC BAA-1087)).